An 862-amino-acid polypeptide reads, in one-letter code: MCSGVSPVEQVAAGDMDDTAARFCVQKHSWDGLRSIIHGSRKSSGLIVSKAPHDFQFVQKPDESGPHSHRLYYLGMPYGSRENSLLYSEIPKKVRKEALLLLSWKQMLDHFQATPHHGVYSREEELLRERKRLGVFGITSYDFHSESGLFLFQASNSLFHCRDGGKNGFMVSPMKPLEIKTQCSGPRMDPKICPADPAFFSFINNSDLWVANIETGEERRLTFCHQGSAGVLDNPKSAGVATFVIQEEFDRFTGCWWCPTASWEGSEGLKTLRILYEEVDESEVEVIHVPSPALEERKTDSYRYPRTGSKNPKIALKLAELQTDHQGKIVSSCEKELVQPFSSLFPKVEYIARAGWTRDGKYAWAMFLDRPQQRLQLVLLPPALFIPAVESEAQRQAAARAVPKNVQPFVIYEEVTNVWINVHDIFHPFPQAEGQQDFCFLRANECKTGFCHLYRVTVELKTKDYDWTEPLSPTEDEFKCPIKEEVALTSGEWEVLSRHGSKIWVNEQTKLVYFQGTKDTPLEHHLYVVSYESAGEIVRLTTLGFSHSCSMSQSFDMFVSHYSSVSTPPCVHVYKLSGPDDDPLHKQPRFWASMMEAANCPPDYVPPEIFHFHTRADVQLYGMIYKPHTLQPGRKHPTVLFVYGGPQVQLVNNSFKGIKYLRLNTLASLGYAVVVIDGRGSCQRGLHFEGALKNQMGQVEIEDQVEGLQYVAEKYGFIDLSRVAIHGWSYGGFLSLMGLIHKPQVFKVAIAGAPVTVWMAYDTGYTERYMDVPENNQQGYEAGSVALHVEKLPNEPNRLLILHGFLDENVHFFHTNFLVSQLIRAGKPYQLQIYPNERHSIRCRESGEHYEVTLLHFLQEHL.

Residues serine 729, aspartate 807, and histidine 839 each act as charge relay system in the active site. Serine 729 contacts Val-boroPro.

The protein belongs to the peptidase S9B family. DPPIV subfamily. In terms of assembly, homodimer. Forms a ternary complex with NLRP1, composed of a DPP9 homodimer, one full-length NLRP1 protein, and one cleaved C-terminus of NLRP1 (NACHT, LRR and PYD domains-containing protein 1, C-terminus). Forms a ternary complex with CARD8, composed of a DPP9 homodimer, one full-length NLRP1 protein, and one cleaved C-terminus of CARD8 (Caspase recruitment domain-containing protein 8, C-terminus). In the ternary complex, only one subunit of the DPP9 homodimer is bound to NLRP1 or CARD8. As to expression, detected in kidney, skin, brain, thymus and liver (at protein level).

The protein resides in the cytoplasm. The protein localises to the cytosol. It catalyses the reaction Release of an N-terminal dipeptide, Xaa-Yaa-|-Zaa-, from a polypeptide, preferentially when Yaa is Pro, provided Zaa is neither Pro nor hydroxyproline.. With respect to regulation, inhibited by the serine proteinase inhibitor 4-(2-aminoethyl)benzenesulphonyl fluoride (AEBSF), and by di-isopropylfluorophosphate. Inhibited by Val-boroPro (Talabostat, PT-100), a non-selective inhibitor, which triggers pyroptosis in monocytes and macrophages. Val-boroPro inhibits activity by binding to the active site, mimicking a substrate-bound state, thereby displacing the C-terminal fragment of NLRP1, leading to activation of the NLRP1 inflammasome. In contrast, Val-boroPro does not directly displaces CARD8: it acts by promoting degradation of the N-terminal part of CARD8, leading to indirect disruption of the ternary complex. Dipeptidyl peptidase that cleaves off N-terminal dipeptides from proteins having a Pro or Ala residue at position 2. Acts as a key inhibitor of caspase-1-dependent monocyte and macrophage pyroptosis in resting cells by preventing activation of NLRP1 and CARD8. Sequesters the cleaved C-terminal part of NLRP1 and CARD8, which respectively constitute the active part of the NLRP1 and CARD8 inflammasomes, in a ternary complex, thereby preventing their oligomerization and activation. The dipeptidyl peptidase activity is required to suppress NLRP1 and CARD8; however, neither NLRP1 nor CARD8 are bona fide substrates of DPP9, suggesting the existence of substrate(s) required for NLRP1 and CARD8 inhibition. The chain is Dipeptidyl peptidase 9 from Mus musculus (Mouse).